Reading from the N-terminus, the 431-residue chain is Tyrosine--tRNA ligase (431 aa).

Tyr-34 provides a ligand contact to L-tyrosine. Positions 39–48 (PTADSLHIGH) match the 'HIGH' region motif. Positions 171 and 175 each coordinate L-tyrosine. Residues 231 to 235 (KFGKT) carry the 'KMSKS' region motif. ATP is bound at residue Lys-234. Positions 353–422 (INVVEALVKT…GKYTILRRGK (70 aa)) constitute an S4 RNA-binding domain.

This sequence belongs to the class-I aminoacyl-tRNA synthetase family. TyrS type 1 subfamily. Homodimer.

It localises to the cytoplasm. It carries out the reaction tRNA(Tyr) + L-tyrosine + ATP = L-tyrosyl-tRNA(Tyr) + AMP + diphosphate + H(+). Catalyzes the attachment of tyrosine to tRNA(Tyr) in a two-step reaction: tyrosine is first activated by ATP to form Tyr-AMP and then transferred to the acceptor end of tRNA(Tyr). The sequence is that of Tyrosine--tRNA ligase from Neisseria meningitidis serogroup C / serotype 2a (strain ATCC 700532 / DSM 15464 / FAM18).